We begin with the raw amino-acid sequence, 996 residues long: MAESFFSDFGLLWYLEELKKEEFWKFKELLKQEPLKLKLKPIPWTELKKASRENVSKLLSKHYPGKLAWDVTLNLFLQISRDDLWRKARNEIRQKINPYRSHMKQKFQVLWEKEPCLLVPEDFYEETTKIEYELLSTVYLDAFKPGESSPTVVLHGPEGIGKTTFLRKVMLEWAKGNLWRDRFSFVFFLTGREMNGVTDMSLVELLSRDWPESSEPIEDIFSQPERILFILDGMEELKFDLDCNADLCEDWEQPQSMQVVLQSLLQKQMLPECSLLLALSKMGMRKNYSLLKHMKCIFLLGFSEHQRKLYFSHYFQEKDASSRAFSFVREKSSLFVLCQSPFLCWLVCTSLKCQLEKGEDLELDSETITGLYVSFFTKVFRSGSETCPLKQRRARLKSLCTLAAEGMWTCTFLFCPEDLRRNGVSESDTSMWLDMKLLHRSGDCLAFIHTCIQEFCAAMFYMFTRPKDPPHSVIGNVTQLITRAVSGHYSRLSWTAVFLFVFSTERMTHRLETSFGFPLSKEIKQEITQSLDTLSQCDPNNVMMSFQALFNCLFETQDPEFVAQVVNFFKDIDIYIGTKEELIICAACLRHCHSLQKFHLCMEHVFPDESGCISNTIEKLTLWRDVCSAFAASEDFEILNLDNCRFDEPSLAVLCRTLSQPVCKLRKFVCNFASNLANSLELFKVILHNPHLKHLNFYGSSLSHMDARQLCEALKHPMCNIEELMLGKCDITGEACEDIASVLVHNKKLNLLSLCENALKDDGVLVLCEALKNPDCALEALLLSHCCFSSAACDHLSQVLLYNRSLTFLDLGSNVLKDEGVTTLCESLKHPSCNLQELWLMNCYFTSVCCVDIATVLIHSEKLKTLKLGNNKIYDAGAKQLCKALKHPKCKLENLGLEACELSPASCEDLASALTTCKSLTCVNLEWITLDYDGAAVLCEALVSLECSLQLLGLNKSSYDEEIKMMLTQVEEMNPNLIISHHLWTDDEGRRRGILV.

Positions 1–94 (MAESFFSDFG…WRKARNEIRQ (94 aa)) constitute a Pyrin domain. The region spanning 150-469 (PTVVLHGPEG…FYMFTRPKDP (320 aa)) is the NACHT domain. 156-163 (GPEGIGKT) contributes to the ATP binding site. 6 LRR repeats span residues 748–769 (KLNLLSLCENALKDDGVLVLCE), 777–798 (ALEALLLSHCCFSSAACDHLSQ), 805–825 (SLTFLDLGSNVLKDEGVTTLC), 834–855 (NLQELWLMNCYFTSVCCVDIAT), 862–883 (KLKTLKLGNNKIYDAGAKQLCK), and 891–914 (KLENLGLEACELSPASCEDLASAL).

This sequence belongs to the NLRP family. As to quaternary structure, sensor component of NLRP9 inflammasomes. Inflammasomes are supramolecular complexes that assemble in the cytosol in response to pathogens, such as rotavirus, and play critical roles in innate immunity and inflammation. The core of NLRP9 inflammasomes consists of a signal sensor component (NLRP9), an adapter (ASC/PYCARD), which recruits an effector pro-inflammatory caspase (CASP1). Within the complex, NLRP9 and PYCARD interact via their respective DAPIN/pyrin domains. This interaction initiates speck formation (nucleation) which greatly enhances further addition of soluble PYCARD molecules to the speck in a prion-like polymerization process. Clustered PYCARD nucleates the formation of CASP1 filaments through the interaction of their respective CARD domains, acting as a platform for CASP1 polymerization. CASP1 filament formation increases local enzyme concentration, resulting in trans-autocleavage and activation. Active CASP1 then processes IL1B and IL18 precursors, leading to the release of mature cytokines in the extracellular milieu and inflammatory response. Interacts with DHX9 upon rotavirus infection; this interaction may trigger inflammasome activation and inflammatory response. As to expression, detected exclusively in testis and ovary, and at high level in the oocyte from antral follicles.

It localises to the cytoplasm. Its subcellular location is the inflammasome. As the sensor component of the NLRP9 inflammasome, plays a crucial role in innate immunity and inflammation. In response to pathogens, including rotavirus, initiates the formation of the inflammasome polymeric complex, made of NLRP9, PYCARD and CASP1. Recruitment of proCASP1 to the inflammasome promotes its activation and CASP1-catalyzed IL1B and IL18 maturation and release in the extracellular milieu. The active cytokines stimulate inflammatory responses. Inflammasomes can also induce pyroptosis, an inflammatory form of programmed cell death. NLRP9 inflammasome activation may be initiated by DHX9 interaction with viral double-stranded RNA (dsRNA), preferentially to short dsRNA segments. This Bos taurus (Bovine) protein is NACHT, LRR and PYD domains-containing protein 9 (NLRP9).